The primary structure comprises 331 residues: Benzylsuccinate synthase activating enzyme (331 aa).

One can recognise a Radical SAM core domain in the interval Q15 to A315. Residues C29, C33, C36, C55, C58, C61, C65, C89, C92, C95, and C99 each coordinate [4Fe-4S] cluster. W35–H37 is a binding site for S-adenosyl-L-methionine. 2 4Fe-4S ferredoxin-type domains span residues Q46–N75 and T80–Q109. Residues G139, D189–K191, and H263 contribute to the S-adenosyl-L-methionine site.

This sequence belongs to the organic radical-activating enzymes family. [4Fe-4S] cluster is required as a cofactor.

It carries out the reaction glycyl-[protein] + reduced [flavodoxin] + S-adenosyl-L-methionine = glycin-2-yl radical-[protein] + semiquinone [flavodoxin] + 5'-deoxyadenosine + L-methionine + H(+). It participates in xenobiotic degradation; toluene degradation [regulation]. Functionally, activation of benzylsuccinate synthase under anaerobic conditions by generation of an organic free radical, using S-adenosylmethionine and reduced flavodoxin as cosubstrates to produce 5'-deoxy-adenosine. The sequence is that of Benzylsuccinate synthase activating enzyme (bssD) from Thauera aromatica.